Here is a 327-residue protein sequence, read N- to C-terminus: GTPase Obg (327 aa).

The region spanning 1-159 (MQFIDQANII…WEVQLELKLL (159 aa)) is the Obg domain. Positions 160-327 (AEVGIIGLPN…SLLSEVWKRI (168 aa)) constitute an OBG-type G domain. Residues 166 to 173 (GLPNAGKS), 191 to 195 (FTTLI), 213 to 216 (DIPG), 280 to 283 (NKME), and 309 to 311 (SSS) contribute to the ATP site. Residues Ser173 and Thr193 each contribute to the Mg(2+) site.

This sequence belongs to the TRAFAC class OBG-HflX-like GTPase superfamily. OBG GTPase family. In terms of assembly, monomer. Mg(2+) is required as a cofactor.

The protein localises to the cytoplasm. Functionally, an essential GTPase which binds GTP, GDP and possibly (p)ppGpp with moderate affinity, with high nucleotide exchange rates and a fairly low GTP hydrolysis rate. Plays a role in control of the cell cycle, stress response, ribosome biogenesis and in those bacteria that undergo differentiation, in morphogenesis control. In Prochlorococcus marinus (strain MIT 9215), this protein is GTPase Obg.